A 311-amino-acid polypeptide reads, in one-letter code: Tricarboxylate transport protein, mitochondrial (311 aa).

A propeptide spans 1 to 13 (MAAPRAPRALTAA) (removed in mature form). Solcar repeat units follow at residues 23–111 (THPG…LSNH), 122–208 (RRGL…LRNW), and 218–303 (MNPL…VVKL). A run of 3 helical transmembrane segments spans residues 29–46 (ILAGGLAGGIEICITFPT), 86–105 (GLSSLLYGSIPKAAVRFGMF), and 129–143 (LGAGVAEAVVVVCPM). At S156 the chain carries Phosphoserine. 3 consecutive transmembrane segments (helical) span residues 183 to 202 (GLTATVLKQGSNQAIRFFVM), 224 to 241 (GVFGAVAGAASVFGNTPL), and 278 to 297 (GTVPRLGRVCLDVAIVFVIY).

It belongs to the mitochondrial carrier (TC 2.A.29) family. Possesses a short cleavable presequence, which, however, is found to be dispensable both for targeting to mitochondria and insertion into the inner membrane. However, the presequence is required to keep SLC25A1 in a soluble state and thus in an import-competent state. Mature SLC25A1 lacking the presequence is prone to aggregation.

The protein resides in the mitochondrion inner membrane. It catalyses the reaction (S)-malate(in) + citrate(out) = (S)-malate(out) + citrate(in). The enzyme catalyses citrate(out) + succinate(in) = citrate(in) + succinate(out). The catalysed reaction is D-threo-isocitrate(in) + citrate(out) = D-threo-isocitrate(out) + citrate(in). It carries out the reaction cis-aconitate(in) + citrate(out) = cis-aconitate(out) + citrate(in). It catalyses the reaction trans-aconitate(in) + citrate(out) = trans-aconitate(out) + citrate(in). The enzyme catalyses phosphoenolpyruvate(in) + citrate(out) = phosphoenolpyruvate(out) + citrate(in). The catalysed reaction is maleate(in) + citrate(out) = maleate(out) + citrate(in). Its function is as follows. Mitochondrial electroneutral antiporter that exports citrate from the mitochondria into the cytosol in exchange for malate. Also able to mediate the exchange of citrate for isocitrate, phosphoenolpyruvate, cis-aconitate and to a lesser extent trans-aconitate, maleate and succinate. In the cytoplasm, citrate plays important roles in fatty acid and sterol synthesis, regulation of glycolysis, protein acetylation, and other physiopathological processes. This chain is Tricarboxylate transport protein, mitochondrial (Slc25a1), found in Rattus norvegicus (Rat).